A 366-amino-acid chain; its full sequence is Homer protein homolog 1 (366 aa).

Positions 1 to 110 constitute a WH1 domain; the sequence is MGEQPIFSTR…EKFQEFKEAA (110 aa). Gly-2 is modified (N-acetylglycine). The interval 114-189 is disordered; it reads KEKSQEKMEL…RTQGLSHASS (76 aa). The segment covering 138-147 has biased composition (polar residues); the sequence is SPLTPESING. Residues 193–364 adopt a coiled-coil conformation; it reads KHWEAELATL…LRDNLAKLLE (172 aa). Positions 302 to 366 are required for tetramerization; the sequence is KLQEVEIRNK…DNLAKLLECS (65 aa). Phosphoserine is present on Ser-318.

The protein belongs to the Homer family. As to quaternary structure, tetramer; this tetrameric structure is critical for forming the high-order complex with SHANK1, which in turn is necessary for the structural and functional integrity of dendritic spines. Interacts with GRM1, GRM5, ITPR1, DYN3, RYR1, RYR2 and SHANK3. Interacts with IFT57 and OPHN1. Isoform 1 and isoform 2 encode coiled-coil structures that mediate homo- and heteromultimerization. Interacts with SHANK1; forms high-order polymerized complex with a mesh-like network structure, at least composed of SHANK1, HOMER1 and DLGAP1; the complex formation is SHANK1 multimerization dependent. Interacts with NFATC4. Interacts with DAGLA (via PPXXF motif); this interaction is required for the cell membrane localization of DAGLA. Interacts with SRGAP2. Highly expressed in cortex, Purkinje cells of the cerebellum, hippocampus, striatum and olfactory bulb. Isoform 1 and isoform 3 are expressed in skeletal and cardiac muscle.

The protein localises to the cytoplasm. It localises to the postsynaptic density. The protein resides in the synapse. It is found in the cell projection. Its subcellular location is the dendritic spine. Its function is as follows. Postsynaptic density scaffolding protein. Binds and cross-links cytoplasmic regions of GRM1, GRM5, ITPR1, DNM3, RYR1, RYR2, SHANK1 and SHANK3. By physically linking GRM1 and GRM5 with ER-associated ITPR1 receptors, it aids the coupling of surface receptors to intracellular calcium release. May also couple GRM1 to PI3 kinase through its interaction with AGAP2. Differentially regulates the functions of the calcium activated channel ryanodine receptors RYR1 and RYR2. Isoform 1 decreases the activity of RYR2, and increases the activity of RYR1, whereas isoform 3 counteracts the effects by competing for binding sites. Isoform 1 regulates the trafficking and surface expression of GRM5. Isoform 3 acts as a natural dominant negative, in dynamic competition with constitutively expressed isoform 1, and isoform 2 to regulate synaptic metabotropic glutamate function. Isoform 3, may be involved in the structural changes that occur at synapses during long-lasting neuronal plasticity and development. Forms a high-order complex with SHANK1, which in turn is necessary for the structural and functional integrity of dendritic spines. Negatively regulates T cell activation by inhibiting the calcineurin-NFAT pathway. Acts by competing with calcineurin/PPP3CA for NFAT protein binding, hence preventing NFAT activation by PPP3CA. In Rattus norvegicus (Rat), this protein is Homer protein homolog 1.